The chain runs to 207 residues: Ribonuclease HII (207 aa).

Residues 19–207 (HCIAGVDEVG…PVKKALGIEE (189 aa)) form the RNase H type-2 domain. A divalent metal cation-binding residues include Asp-25, Glu-26, and Asp-117.

The protein belongs to the RNase HII family. Mn(2+) serves as cofactor. It depends on Mg(2+) as a cofactor.

It is found in the cytoplasm. The catalysed reaction is Endonucleolytic cleavage to 5'-phosphomonoester.. Functionally, endonuclease that specifically degrades the RNA of RNA-DNA hybrids. The chain is Ribonuclease HII from Vibrio vulnificus (strain CMCP6).